We begin with the raw amino-acid sequence, 241 residues long: Sensory transduction protein LytT (241 aa).

The Response regulatory domain maps to 3–117; that stretch reads RVLIVDDEML…RIQQTLKKYK (115 aa). Asp-54 is modified (4-aspartylphosphate). In terms of domain architecture, HTH LytTR-type spans 137–241; the sequence is LALSVGESIV…AKELKKLLHI (105 aa).

In terms of processing, phosphorylated by LytS.

The protein resides in the cytoplasm. Functionally, member of the two-component regulatory system LytS/LytT that probably regulates genes involved in cell wall metabolism. The chain is Sensory transduction protein LytT (lytT) from Bacillus subtilis (strain 168).